The chain runs to 367 residues: Putrescine-binding periplasmic protein SpuD (367 aa).

Positions 1–24 (MMKRFGKTLLALTLAGSVAGMAQA) are cleaved as a signal peptide. 36-37 (SD) contacts putrescine. Cys173 and Cys236 form a disulfide bridge. Positions 244 and 275 each coordinate putrescine.

It belongs to the bacterial solute-binding protein PotD/PotF family.

The protein localises to the periplasm. It is found in the secreted. In terms of biological role, putrescine-binding protein probably required for putrescine uptake into cells. Binds putrescine with high affinity, spermidine with relatively low affinity. Does not bind cadaverine or spermine. Putrescine binding induces large inter-domain conformational changes. The polypeptide is Putrescine-binding periplasmic protein SpuD (spuD) (Pseudomonas aeruginosa (strain UCBPP-PA14)).